Here is a 90-residue protein sequence, read N- to C-terminus: Small ribosomal subunit protein uS17 (90 aa).

The protein belongs to the universal ribosomal protein uS17 family. In terms of assembly, part of the 30S ribosomal subunit.

In terms of biological role, one of the primary rRNA binding proteins, it binds specifically to the 5'-end of 16S ribosomal RNA. This is Small ribosomal subunit protein uS17 from Burkholderia multivorans (strain ATCC 17616 / 249).